A 27-amino-acid polypeptide reads, in one-letter code: Omega-conotoxin RVIA (27 aa).

3 disulfides stabilise this stretch: Cys-1-Cys-16, Cys-8-Cys-19, and Cys-15-Cys-26. Pro-4 and Pro-7 each carry 4-hydroxyproline.

Belongs to the conotoxin O1 superfamily. As to expression, expressed by the venom duct.

It is found in the secreted. Functionally, omega-conotoxins act at presynaptic membranes, they bind and block voltage-gated calcium channels (Cav). This chain is Omega-conotoxin RVIA, found in Conus radiatus (Rayed cone).